A 39-amino-acid polypeptide reads, in one-letter code: Photosystem II reaction center protein Psb30 (39 aa).

A helical membrane pass occupies residues 12–32 (IFQLTFVGLIVIAGPIVIAVL).

Belongs to the Psb30/Ycf12 family. PSII is composed of 1 copy each of membrane proteins PsbA, PsbB, PsbC, PsbD, PsbE, PsbF, PsbH, PsbI, PsbJ, PsbK, PsbL, PsbM, PsbT, PsbX, PsbY, PsbZ, Psb30/Ycf12, peripheral proteins PsbO, CyanoQ (PsbQ), PsbU, PsbV and a large number of cofactors. It forms dimeric complexes.

The protein localises to the cellular thylakoid membrane. Its function is as follows. A core subunit of photosystem II (PSII), probably helps stabilize the reaction center. This is Photosystem II reaction center protein Psb30 from Crocosphaera subtropica (strain ATCC 51142 / BH68) (Cyanothece sp. (strain ATCC 51142)).